Reading from the N-terminus, the 593-residue chain is Aspartate--tRNA ligase (593 aa).

Glu-180 serves as a coordination point for L-aspartate. Residues 204 to 207 form an aspartate region; that stretch reads QIFK. Arg-226 serves as a coordination point for L-aspartate. ATP is bound by residues 226–228 and Gln-235; that span reads RDE. His-453 lines the L-aspartate pocket. Position 487 (Glu-487) interacts with ATP. Arg-494 serves as a coordination point for L-aspartate. 539 to 542 provides a ligand contact to ATP; sequence GLDR.

It belongs to the class-II aminoacyl-tRNA synthetase family. Type 1 subfamily. In terms of assembly, homodimer.

It localises to the cytoplasm. It catalyses the reaction tRNA(Asp) + L-aspartate + ATP = L-aspartyl-tRNA(Asp) + AMP + diphosphate. Functionally, catalyzes the attachment of L-aspartate to tRNA(Asp) in a two-step reaction: L-aspartate is first activated by ATP to form Asp-AMP and then transferred to the acceptor end of tRNA(Asp). The protein is Aspartate--tRNA ligase of Clostridium botulinum (strain Loch Maree / Type A3).